The sequence spans 207 residues: Outer-membrane lipoprotein LolB (207 aa).

A signal peptide spans 1-21 (MPMRKRHFYRLLPLASLLLAA). C22 carries the N-palmitoyl cysteine lipid modification. C22 carries S-diacylglycerol cysteine lipidation.

Belongs to the LolB family. Monomer.

The protein resides in the cell outer membrane. Plays a critical role in the incorporation of lipoproteins in the outer membrane after they are released by the LolA protein. The protein is Outer-membrane lipoprotein LolB of Yersinia pseudotuberculosis serotype IB (strain PB1/+).